The primary structure comprises 455 residues: Glutamate--tRNA ligase (455 aa).

The 'HIGH' region motif lies at 8–18; the sequence is PSPTGYLHIGG. The 'KMSKS' region motif lies at 231 to 235; the sequence is RLSKR. Position 234 (lysine 234) interacts with ATP.

The protein belongs to the class-I aminoacyl-tRNA synthetase family. Glutamate--tRNA ligase type 1 subfamily. Monomer.

It localises to the cytoplasm. It carries out the reaction tRNA(Glu) + L-glutamate + ATP = L-glutamyl-tRNA(Glu) + AMP + diphosphate. In terms of biological role, catalyzes the attachment of glutamate to tRNA(Glu) in a two-step reaction: glutamate is first activated by ATP to form Glu-AMP and then transferred to the acceptor end of tRNA(Glu). This Vesicomyosocius okutanii subsp. Calyptogena okutanii (strain HA) protein is Glutamate--tRNA ligase.